The primary structure comprises 392 residues: L-serine phosphate decarboxylase (392 aa).

Positions 22 to 29 are required for catalytic activity; sequence NAGSHSPS. N180 serves as a coordination point for O-phospho-L-serine. K243 carries the post-translational modification N6-(pyridoxal phosphate)lysine. Positions 354 and 368 each coordinate O-phospho-L-serine.

The protein belongs to the class-II pyridoxal-phosphate-dependent aminotransferase family. As to quaternary structure, homodimer. Requires pyridoxal 5'-phosphate as cofactor.

The catalysed reaction is O-phospho-L-serine + H(+) = phosphoethanolamine + CO2. Its pathway is cofactor biosynthesis. Pyridoxal phosphate (PLP)-dependent decarboxylase involved in the biosynthesis of norcobamides, cofactors in the tetrachloroethene reductive dehalogenase PceA of S.multivorans. Catalyzes the decarboxylation of L-serine O-phosphate to ethanolamine O-phosphate, the precursor for the linkage between the nucleotide loop and the corrin ring in norcobamide. Less active with L-threonine phosphate. No activity with L-serine or L-threonine. Has no aminotransferase activity as no production of L-glutamate with L-histidinol phosphate and 2-oxoglutarate as substrates. Complements growth defects in the S.enterica cobD deletion mutant, but of the cobamides, the norpseudo-vitamin B12 (norpseudo-B12) rather than the pseudo-B12 is produced in the mutant. However, addition of L-threonine phosphate to the culture minimal medium of the mutant results in formation of also the pseudo-B12, indicating the dual substrate specificity of this enzyme. The chain is L-serine phosphate decarboxylase from Sulfurospirillum multivorans (strain DM 12446 / JCM 15788 / NBRC 109480).